A 119-amino-acid chain; its full sequence is Immunoglobulin heavy variable 3-49 (119 aa).

The signal sequence occupies residues 1 to 19 (MEFGLSWVFLVAILKGVQC). The segment at 20 to 44 (EVQLVESGGGLVQPGRSLRLSCTAS) is framework-1. The Ig-like domain maps to 20–119 (EVQLVESGGG…EDTAVYYCTR (100 aa)). A disulfide bridge connects residues C41 and C117. The complementarity-determining-1 stretch occupies residues 45-52 (GFTFGDYA). The segment at 53-69 (MSWVRQAPGKGLEWVGF) is framework-2. The complementarity-determining-2 stretch occupies residues 70–79 (IRSKAYGGTT). The segment at 80–117 (EYAASVKGRFTISRDDSKSIAYLQMNSLKTEDTAVYYC) is framework-3. Residues 118–119 (TR) are complementarity-determining-3.

Immunoglobulins are composed of two identical heavy chains and two identical light chains; disulfide-linked.

Its subcellular location is the secreted. It is found in the cell membrane. V region of the variable domain of immunoglobulin heavy chains that participates in the antigen recognition. Immunoglobulins, also known as antibodies, are membrane-bound or secreted glycoproteins produced by B lymphocytes. In the recognition phase of humoral immunity, the membrane-bound immunoglobulins serve as receptors which, upon binding of a specific antigen, trigger the clonal expansion and differentiation of B lymphocytes into immunoglobulins-secreting plasma cells. Secreted immunoglobulins mediate the effector phase of humoral immunity, which results in the elimination of bound antigens. The antigen binding site is formed by the variable domain of one heavy chain, together with that of its associated light chain. Thus, each immunoglobulin has two antigen binding sites with remarkable affinity for a particular antigen. The variable domains are assembled by a process called V-(D)-J rearrangement and can then be subjected to somatic hypermutations which, after exposure to antigen and selection, allow affinity maturation for a particular antigen. The sequence is that of Immunoglobulin heavy variable 3-49 from Homo sapiens (Human).